A 385-amino-acid polypeptide reads, in one-letter code: WD repeat-containing protein 74 (385 aa).

6 WD repeats span residues 40 to 80 (RREE…FQGQ), 83 to 122 (CPGGEGMFRGLAQADGTLITCVDSGILRVWHDKDKDTSSD), 128 to 168 (RVGP…EPVF), 179 to 220 (DLRV…RRPV), 224 to 266 (TYGE…GCLK), and 267 to 306 (GLAGSVRGLQCHPSKPLLASCGLDRVLRIHRIQNPRGLEH). A Phosphoserine modification is found at Ser-214. At Lys-311 the chain carries N6-methyllysine. The interval 320–385 (SGRDNWEDEP…KKKRPGSTSP (66 aa)) is required for nucleolar and nuclear location. Disordered stretches follow at residues 323-345 (DNWEDEPQEPQEPNKVPLEDTET) and 360-385 (LSGLEQPQGALQTRRRKKKRPGSTSP). Ser-361 carries the phosphoserine modification. Basic residues predominate over residues 372–385 (TRRRKKKRPGSTSP).

Isoform 1 interacts (through WDR repeats) with NVL; the interaction is independent of RNA or pre-60S ribosome particles. Isoform 2 does not interact with NVL. Interacts with MTREX; the interaction dissociation in a late stage of rRNA synthesis is required for appropriate maturation of pre-60S particles and depends on the ATPase activity of NVL.

The protein localises to the nucleus. It is found in the nucleolus. Functionally, regulatory protein of the MTREX-exosome complex involved in the synthesis of the 60S ribosomal subunit. Participates in an early cleavage of the pre-rRNA processing pathway in cooperation with NVL. Required for blastocyst formation, is necessary for RNA transcription, processing and/or stability during preimplantation development. The chain is WD repeat-containing protein 74 (WDR74) from Homo sapiens (Human).